Here is a 451-residue protein sequence, read N- to C-terminus: UPF0210 protein lmo0534 (451 aa).

The protein belongs to the UPF0210 family. As to quaternary structure, homodimer.

In Listeria monocytogenes serovar 1/2a (strain ATCC BAA-679 / EGD-e), this protein is UPF0210 protein lmo0534.